Reading from the N-terminus, the 230-residue chain is Complex I assembly factor TMEM126B, mitochondrial (230 aa).

Transmembrane regions (helical) follow at residues 70-92 (LNIH…ANLV), 107-126 (YASL…KLFV), 139-161 (SCVL…ALAF), and 196-218 (AMAI…HYNI).

Belongs to the TMEM126 family. In terms of assembly, part of the mitochondrial complex I assembly/MCIA complex that comprises at least the core subunits TMEM126B, NDUFAF1, ECSIT and ACAD9 and complement subunits such as COA1 and TMEM186. Associates with the intermediate 370 kDa subcomplex of incompletely assembled complex I. Interacts with TMEM70.

The protein localises to the mitochondrion membrane. In terms of biological role, as part of the MCIA complex, involved in the assembly of the mitochondrial complex I. Participates in constructing the membrane arm of complex I. This chain is Complex I assembly factor TMEM126B, mitochondrial, found in Mus musculus (Mouse).